Reading from the N-terminus, the 314-residue chain is MARRRKGRPINGVILLDKPTGISSNDALQKVKRIYFAEKAGHTGALDPLATGMLPICLGEATKFSQFLLDSDKRYRVIAKLGERTNTSDSDGEVVETRPVDVTLEKLEACIEKFRGESDQVPSMFSALKYQGKPLYEYARKGIEVPRESRKITVYEIILHRFEGDEVEMEVHCSKGTYIRTIVDDLGEMLGCGAHVTMLRRTAVAKYPYEKMVTLEQLNELLEQAHREEIAPRELLDPLLMPMDTAVEDLPEVNLIPELADMVQHGQPVQVLGAPEQGFLRLTMGEEHLFIGVGEMNDDGKIAPKRLVVFRDEE.

The Nucleophile role is filled by Asp-47.

This sequence belongs to the pseudouridine synthase TruB family. Type 1 subfamily.

It carries out the reaction uridine(55) in tRNA = pseudouridine(55) in tRNA. In terms of biological role, responsible for synthesis of pseudouridine from uracil-55 in the psi GC loop of transfer RNAs. The sequence is that of tRNA pseudouridine synthase B from Vibrio parahaemolyticus serotype O3:K6 (strain RIMD 2210633).